The following is a 400-amino-acid chain: Multidrug resistance protein MdtH (400 aa).

The next 10 membrane-spanning stretches (helical) occupy residues 13 to 33 (YFLL…FPLI), 34 to 54 (SIRF…ALGL), 99 to 116 (PWIL…GTLF), 139 to 159 (LLLM…SWLL), 165 to 185 (LVCW…AWLL), 214 to 234 (VLTL…FPIV), 244 to 264 (AVKW…YPIA), 289 to 309 (FPVG…LFYL), 340 to 360 (LGLA…YDIG), and 365 to 385 (LPEL…YALH).

It belongs to the major facilitator superfamily. DHA1 family. MdtH (TC 2.A.1.2.21) subfamily.

Its subcellular location is the cell inner membrane. This is Multidrug resistance protein MdtH from Proteus mirabilis (strain HI4320).